A 145-amino-acid chain; its full sequence is Bacilliredoxin SAOUHSC_01610 (145 aa).

This sequence belongs to the bacilliredoxin family.

The sequence is that of Bacilliredoxin SAOUHSC_01610 from Staphylococcus aureus (strain NCTC 8325 / PS 47).